Reading from the N-terminus, the 681-residue chain is Sodium-dependent phosphate transporter 1 (681 aa).

Helical transmembrane passes span 25–45 (YLWM…SVGA), 66–86 (ACIL…AKVS), 106–126 (LMAG…VASF), 162–182 (IVMS…ILFF), 207–227 (ACTV…LLGF), and 234–254 (GTIL…WFFV). Residues serine 269 and serine 273 each carry the phosphoserine modification. The tract at residues 269–296 (SPSESPLMEKKNSLKEDHEETKLSVSDI) is disordered. A compositionally biased stretch (basic and acidic residues) spans 275–290 (LMEKKNSLKEDHEETK). Transmembrane regions (helical) follow at residues 515 to 535 (VSLL…FAHG), 562 to 582 (VATP…GLWV), 604 to 624 (FSIE…GLPI), and 654 to 674 (IFMA…AIMA). Residues 554 to 562 (DTGDVSSKV) are a.

This sequence belongs to the inorganic phosphate transporter (PiT) (TC 2.A.20) family.

The protein localises to the cell membrane. It catalyses the reaction 2 Na(+)(out) + phosphate(out) = 2 Na(+)(in) + phosphate(in). Functionally, sodium-phosphate symporter which preferentially transports the monovalent form of phosphate with a stoichiometry of two sodium ions per phosphate ion. May play a role in extracellular matrix and cartilage calcification as well as in vascular calcification. Essential for cell proliferation but this function is independent of its phosphate transporter activity. The chain is Sodium-dependent phosphate transporter 1 (Slc20a1) from Felis catus (Cat).